Reading from the N-terminus, the 225-residue chain is UPF0758 protein XOO0495 (225 aa).

The MPN domain occupies 102-224 (ALSDPPSVGR…PVSLAERGWL (123 aa)). Residues His173, His175, and Asp186 each coordinate Zn(2+). A JAMM motif motif is present at residues 173–186 (HNHPSGNPEPSKAD).

It belongs to the UPF0758 family.

The polypeptide is UPF0758 protein XOO0495 (Xanthomonas oryzae pv. oryzae (strain KACC10331 / KXO85)).